The following is a 250-amino-acid chain: Large ribosomal subunit protein uL4 (250 aa).

2 disordered regions span residues 1–20 and 51–101; these read MQVTVRDLDGDDAGTLDLPR and YAGL…HGLD. The segment covering 92 to 101 has biased composition (basic and acidic residues); sequence PKAEKDHGLD.

Belongs to the universal ribosomal protein uL4 family. As to quaternary structure, part of the 50S ribosomal subunit.

One of the primary rRNA binding proteins, this protein initially binds near the 5'-end of the 23S rRNA. It is important during the early stages of 50S assembly. It makes multiple contacts with different domains of the 23S rRNA in the assembled 50S subunit and ribosome. In terms of biological role, forms part of the polypeptide exit tunnel. The polypeptide is Large ribosomal subunit protein uL4 (Halobacterium salinarum (strain ATCC 29341 / DSM 671 / R1)).